A 202-amino-acid polypeptide reads, in one-letter code: Small ribosomal subunit protein uS4 (202 aa).

Positions 91-168 (SRLSSVLYNS…QKVPDYLEVD (78 aa)) constitute an S4 RNA-binding domain.

It belongs to the universal ribosomal protein uS4 family. As to quaternary structure, part of the 30S ribosomal subunit. Contacts protein S5. The interaction surface between S4 and S5 is involved in control of translational fidelity.

One of the primary rRNA binding proteins, it binds directly to 16S rRNA where it nucleates assembly of the body of the 30S subunit. Functionally, with S5 and S12 plays an important role in translational accuracy. This is Small ribosomal subunit protein uS4 from Ehrlichia chaffeensis (strain ATCC CRL-10679 / Arkansas).